The chain runs to 132 residues: Small ribosomal subunit protein uS8 (132 aa).

It belongs to the universal ribosomal protein uS8 family. Part of the 30S ribosomal subunit. Contacts proteins S5 and S12.

Its function is as follows. One of the primary rRNA binding proteins, it binds directly to 16S rRNA central domain where it helps coordinate assembly of the platform of the 30S subunit. In Clostridium tetani (strain Massachusetts / E88), this protein is Small ribosomal subunit protein uS8.